Here is a 379-residue protein sequence, read N- to C-terminus: tRNA (guanine(26)-N(2))-dimethyltransferase (379 aa).

Residues 4 to 375 (VEVLEGKAKI…APYEVFVNVL (372 aa)) form the Trm1 methyltransferase domain. Positions 36, 61, 78, 120, and 121 each coordinate S-adenosyl-L-methionine.

Belongs to the class I-like SAM-binding methyltransferase superfamily. Trm1 family.

The enzyme catalyses guanosine(26) in tRNA + 2 S-adenosyl-L-methionine = N(2)-dimethylguanosine(26) in tRNA + 2 S-adenosyl-L-homocysteine + 2 H(+). Its function is as follows. Dimethylates a single guanine residue at position 26 of a number of tRNAs using S-adenosyl-L-methionine as donor of the methyl groups. This is tRNA (guanine(26)-N(2))-dimethyltransferase from Pyrococcus abyssi (strain GE5 / Orsay).